The chain runs to 318 residues: MLPLTMTVLILLLLPTGQAAPKDGVTRPDSEVQHQLLPNPFQPGQEQLGLLQSYLKGLGRTEVQLEHLSREQVLLYLFALHDYDQSGQLDGLELLSMLTAALAPGAANSPTTNPVILIVDKVLETQDLNGDGLMTPAELINFPGVALRHVEPGEPLAPSPQEPQAVGRQSLLAKSPLRQETQEAPGPREEAKGQVEARRESLDPVQEPGGQAEADGDVPGPRGEAEGQAEAKGDAPGPRGEAGGQAEAEGDAPGPRGEAGGQAEAEGDAPGPRGEAGGQAEARENGEEAKELPGETLESKNTQNDFEVHIVQVENDEI.

The first 19 residues, 1–19 (MLPLTMTVLILLLLPTGQA), serve as a signal peptide directing secretion. 2 EF-hand domains span residues 69 to 104 (SREQ…ALAP) and 114 to 149 (PVIL…ALRH). Residues Asp82, Asp84, Ser86, Gln88, Glu93, Asp127, Asn129, Asp131, and Glu138 each contribute to the Ca(2+) site. A disordered region spans residues 177–318 (LRQETQEAPG…HIVQVENDEI (142 aa)). 2 stretches are compositionally biased toward basic and acidic residues: residues 186–202 (GPRE…RESL) and 223–233 (GEAEGQAEAKG). 3 repeat units span residues 219 to 235 (PGPR…KGDA), 236 to 252 (PGPR…EGDA), and 253 to 269 (PGPR…EGDA). Residues 219–286 (PGPRGEAEGQ…GGQAEARENG (68 aa)) are 4 X 17 AA approximate tandem repeats of P-G-P-R-G-E-A-G-G-Q-A-E-A-[KR]-G-D-A. Residues 235 to 272 (APGPRGEAGGQAEAEGDAPGPRGEAGGQAEAEGDAPGP) are compositionally biased toward low complexity. A 4; approximate repeat occupies 270-286 (PGPRGEAGGQAEARENG). Residues 281–293 (EARENGEEAKELP) are compositionally biased toward basic and acidic residues.

Post-translationally, probably digested extracellularly by an unknown serine protease generating extremely hydrophobic bioactive peptides.

It is found in the secreted. Functionally, mediates cell-cell adhesion in a calcium-dependent manner. Able to inhibit growth in several cell lines. This Homo sapiens (Human) protein is Cell growth regulator with EF hand domain protein 1.